Consider the following 482-residue polypeptide: uncharacterized protein (482 aa).

2 WD repeats span residues 92 to 133 and 191 to 230; these read DMPN…REPI and GHEH…CLCK.

Its subcellular location is the cytoplasm. The protein localises to the nucleus. This is an uncharacterized protein from Schizosaccharomyces pombe (strain 972 / ATCC 24843) (Fission yeast).